We begin with the raw amino-acid sequence, 28 residues long: Nicotinic acetylcholine receptor-binding protein Mnn-3C (28 aa).

Cysteines 3 and 24 form a disulfide.

The protein belongs to the three-finger toxin family. Short-chain subfamily. Expressed by the venom gland.

The protein resides in the secreted. Functionally, binds and may inhibit nicotinic acetylcholine receptors (nAChR). This chain is Nicotinic acetylcholine receptor-binding protein Mnn-3C, found in Micrurus nigrocinctus (Central American coral snake).